The sequence spans 161 residues: Phosphopantetheine adenylyltransferase (161 aa).

Substrate is bound at residue serine 9. Residues 9–10 (SF) and histidine 17 contribute to the ATP site. Residues lysine 41, valine 73, and lysine 87 each contribute to the substrate site. ATP contacts are provided by residues 88–90 (GLR), glutamate 98, and 122–128 (YSFVSSS).

The protein belongs to the bacterial CoaD family. As to quaternary structure, homohexamer. It depends on Mg(2+) as a cofactor.

The protein resides in the cytoplasm. The catalysed reaction is (R)-4'-phosphopantetheine + ATP + H(+) = 3'-dephospho-CoA + diphosphate. The protein operates within cofactor biosynthesis; coenzyme A biosynthesis; CoA from (R)-pantothenate: step 4/5. Reversibly transfers an adenylyl group from ATP to 4'-phosphopantetheine, yielding dephospho-CoA (dPCoA) and pyrophosphate. In Mycobacterium bovis (strain ATCC BAA-935 / AF2122/97), this protein is Phosphopantetheine adenylyltransferase.